The sequence spans 443 residues: Xaa-Pro dipeptidase (443 aa).

Positions 246, 257, 339, 384, and 423 each coordinate Mn(2+).

Belongs to the peptidase M24B family. Bacterial-type prolidase subfamily. The cofactor is Mn(2+).

The catalysed reaction is Xaa-L-Pro dipeptide + H2O = an L-alpha-amino acid + L-proline. Splits dipeptides with a prolyl residue in the C-terminal position. The chain is Xaa-Pro dipeptidase from Escherichia coli O81 (strain ED1a).